The sequence spans 129 residues: Protein Turandot A (129 aa).

The first 21 residues, 1-21, serve as a signal peptide directing secretion; that stretch reads MNSSTALMCFALLLISPLCMG. Asn49 carries N-linked (GlcNAc...) asparagine glycosylation.

The protein belongs to the Turandot family. In terms of tissue distribution, expressed in the fat body (at protein level).

It localises to the secreted. A humoral factor that plays a role in stress tolerance; gives increased resistance to the lethal effects of bacterial challenge and stress. Regulated by the JAK/STAT pathway and NF-KB-like Relish pathway in the fat body, upd3 in the hemocytes and Mekk1 in response to septic injury and consequent immune response. This Drosophila melanogaster (Fruit fly) protein is Protein Turandot A.